A 455-amino-acid polypeptide reads, in one-letter code: Epoxide hydrolase 1 (455 aa).

A helical; Signal-anchor for type III membrane protein transmembrane segment spans residues methionine 1–arginine 21. The Cytoplasmic segment spans residues aspartate 22–glutamine 455. Catalysis depends on aspartate 226, which acts as the Nucleophile. The residue at position 295 (arginine 295) is a Dimethylated arginine. Tyrosine 374 (proton donor) is an active-site residue. Histidine 431 acts as the Proton acceptor in catalysis.

The protein belongs to the peptidase S33 family. Found in liver.

It is found in the microsome membrane. It localises to the endoplasmic reticulum membrane. It catalyses the reaction cis-stilbene oxide + H2O = (1R,2R)-hydrobenzoin. The catalysed reaction is 1-(4-methoxyphenyl)-N-methyl-N-[(3-methyloxetan-3-yl)methyl]methanamine + H2O = 2-{[(4-methoxybenzyl)(methyl)amino]methyl}-2-methylpropane-1,3-diol. The enzyme catalyses 8,9-epoxy-(5Z,11Z,14Z)-eicosatrienoate + H2O = 8,9-dihydroxy-(5Z,11Z,14Z)-eicosatrienoate. It carries out the reaction 11,12-epoxy-(5Z,8Z,14Z)-eicosatrienoate + H2O = 11,12-dihydroxy-(5Z,8Z,14Z)-eicosatrienoate. It catalyses the reaction 2-(5Z,8Z,11Z,14Z-eicosatetraenoyl)-glycerol + H2O = glycerol + (5Z,8Z,11Z,14Z)-eicosatetraenoate + H(+). With respect to regulation, inhibited by 10-hydroxystearamide and methoxy-arachidonyl fluorophosphate. Biotransformation enzyme that catalyzes the hydrolysis of arene and aliphatic epoxides to less reactive and more water soluble dihydrodiols by the trans addition of water. Plays a role in the metabolism of endogenous lipids such as epoxide-containing fatty acids. Metabolizes the abundant endocannabinoid 2-arachidonoylglycerol (2-AG) to free arachidonic acid (AA) and glycerol. Binds 20(S)-hydroxycholesterol (20(S)-OHC). This is Epoxide hydrolase 1 from Homo sapiens (Human).